Reading from the N-terminus, the 498-residue chain is MASQGTKRSYEQMETGGERQNANEIRASVGRMVGGIGRFYIQMCTELKLSDNEGRLIQNSITIERMVLSAFDERRNKYLEEHPSTGRDPKKTGGPIYRRRDGKWVRELVLYDKEELRRIWRQANNGEDATAGLTHLMIWHSNLNDATYQRTRALVRTGMDPRMCSLMQGSTLPRRSGAAGAAVKGVGTMVMELIRMIKRGVNDRNFWRGENGRRTRIAYERMCNILKGKFQTAAQRAMMDQVRESRNPGNAEIEDLIFLARSALILRGAVAHKSCLPACVYGLAVASGYDFEREGYSLVGIDPFRLLQNSQVFSIIRPNENPAHKSQLVWMACHSAAFEDLRVSSFIRGTRVLPRGQLSTRGVQIASNENMETMNSSTLELRSRYWAIRTRSGGNTNQQRASAGQVSVQPTFSVQRNLPFERATIMAAFTGNPEGRTSDMRTEIIRMMENSRPEDVSFQGRGVFELSDEKATNPIVPSFDMSNEGSYFFGDNAEEYDN.

Residues 1–18 (MASQGTKRSYEQMETGGE) carry the Unconventional nuclear localization signal motif. The disordered stretch occupies residues 1 to 22 (MASQGTKRSYEQMETGGERQNA). Positions 198–216 (KRGVNDRNFWRGENGRRTR) match the Bipartite nuclear localization signal motif.

This sequence belongs to the influenza viruses nucleoprotein family. As to quaternary structure, homomultimerizes to form the nucleocapsid. May bind host exportin-1/XPO1. Binds to viral genomic RNA. Protein-RNA contacts are mediated by a combination of electrostatic interactions between positively charged residues and the phosphate backbone and planar interactions between aromatic side chains and bases. Late in virus-infected cells, may be cleaved from a 56-kDa protein to a 53-kDa protein by a cellular caspase. This cleavage might be a marker for the onset of apoptosis in infected cells or have a specific function in virus host interaction.

It is found in the virion. Its subcellular location is the host nucleus. Encapsidates the negative strand viral RNA, protecting it from nucleases. The encapsidated genomic RNA is termed the ribonucleoprotein (RNP) and serves as template for transcription and replication. The RNP needs to be localized in the host nucleus to start an infectious cycle, but is too large to diffuse through the nuclear pore complex. NP comprises at least 2 nuclear localization signals that are responsible for the active RNP import into the nucleus through cellular importin alpha/beta pathway. Later in the infection, nclear export of RNPs are mediated through viral proteins NEP interacting with M1 which binds nucleoproteins. It is possible that nucleoprotein binds directly host exportin-1/XPO1 and plays an active role in RNPs nuclear export. M1 interaction with RNP seems to hide nucleoprotein's nuclear localization signals. Soon after a virion infects a new cell, M1 dissociates from the RNP under acidification of the virion driven by M2 protein. Dissociation of M1 from RNP unmasks nucleoprotein's nuclear localization signals, targeting the RNP to the nucleus. The sequence is that of Nucleoprotein from Aves (whales).